The sequence spans 132 residues: Phosphomevalonate dehydratase small subunit (132 aa).

Catalysis depends on Ser-58, which acts as the Proton acceptor.

It belongs to the AcnX type II small subunit family. Heterodimer composed of a large subunit (PMDh-L) and a small subunit (PMDh-S).

The enzyme catalyses (R)-5-phosphomevalonate = (2E)-3-methyl-5-phosphooxypent-2-enoate + H2O. It participates in isoprenoid biosynthesis; isopentenyl diphosphate biosynthesis via mevalonate pathway. With respect to regulation, neither the addition of 1 mM Mg(2+) nor 1 mM Mn(2+) has a significant effect on the activity, whereas Zn(2+) causes almost complete inactivation. Strongly inhibited by H(2)O(2), but not by EDTA or iodoacetamide. Its function is as follows. Component of a hydro-lyase that catalyzes the dehydration of mevalonate 5-phosphate (MVA5P) to form trans-anhydromevalonate 5-phosphate (tAHMP). Involved in the archaeal mevalonate (MVA) pathway, which provides fundamental precursors for isoprenoid biosynthesis, such as isopentenyl diphosphate (IPP) and dimethylallyl diphosphate (DMAPP). The polypeptide is Phosphomevalonate dehydratase small subunit (Aeropyrum pernix (strain ATCC 700893 / DSM 11879 / JCM 9820 / NBRC 100138 / K1)).